Reading from the N-terminus, the 139-residue chain is Putative pre-16S rRNA nuclease (139 aa).

Belongs to the YqgF nuclease family.

The protein resides in the cytoplasm. Functionally, could be a nuclease involved in processing of the 5'-end of pre-16S rRNA. The chain is Putative pre-16S rRNA nuclease from Streptococcus pneumoniae (strain JJA).